An 89-amino-acid polypeptide reads, in one-letter code: Small ribosomal subunit protein uS17 (89 aa).

It belongs to the universal ribosomal protein uS17 family. Part of the 30S ribosomal subunit.

In terms of biological role, one of the primary rRNA binding proteins, it binds specifically to the 5'-end of 16S ribosomal RNA. This chain is Small ribosomal subunit protein uS17, found in Delftia acidovorans (strain DSM 14801 / SPH-1).